Reading from the N-terminus, the 121-residue chain is Ribonuclease P protein component (121 aa).

The protein belongs to the RnpA family. As to quaternary structure, consists of a catalytic RNA component (M1 or rnpB) and a protein subunit.

The enzyme catalyses Endonucleolytic cleavage of RNA, removing 5'-extranucleotides from tRNA precursor.. In terms of biological role, RNaseP catalyzes the removal of the 5'-leader sequence from pre-tRNA to produce the mature 5'-terminus. It can also cleave other RNA substrates such as 4.5S RNA. The protein component plays an auxiliary but essential role in vivo by binding to the 5'-leader sequence and broadening the substrate specificity of the ribozyme. The chain is Ribonuclease P protein component from Neisseria meningitidis serogroup B (strain ATCC BAA-335 / MC58).